A 231-amino-acid polypeptide reads, in one-letter code: Acyl-protein thioesterase 1 (231 aa).

Residues serine 121, aspartate 178, and histidine 211 each act as charge relay system in the active site.

This sequence belongs to the AB hydrolase superfamily. AB hydrolase 2 family.

The protein resides in the cytoplasm. The protein localises to the nucleus. The enzyme catalyses S-hexadecanoyl-L-cysteinyl-[protein] + H2O = L-cysteinyl-[protein] + hexadecanoate + H(+). Functionally, hydrolyzes fatty acids from S-acylated cysteine residues in proteins with a strong preference for palmitoylated G-alpha proteins over other acyl substrates. Mediates the deacylation of G-alpha proteins such as GPA1 in vivo, but has weak or no activity toward palmitoylated Ras proteins. Has weak lysophospholipase activity in vitro; however such activity may not exist in vivo. This Candida albicans (strain SC5314 / ATCC MYA-2876) (Yeast) protein is Acyl-protein thioesterase 1.